We begin with the raw amino-acid sequence, 124 residues long: NADH-quinone oxidoreductase subunit A (124 aa).

The next 3 membrane-spanning stretches (helical) occupy residues 11–31 (YLPI…IMIL), 68–88 (LVAI…PWAI), and 93–113 (IGKI…IGFV).

The protein belongs to the complex I subunit 3 family. NDH-1 is composed of 14 different subunits. Subunits NuoA, H, J, K, L, M, N constitute the membrane sector of the complex.

It localises to the cell inner membrane. It carries out the reaction a quinone + NADH + 5 H(+)(in) = a quinol + NAD(+) + 4 H(+)(out). In terms of biological role, NDH-1 shuttles electrons from NADH, via FMN and iron-sulfur (Fe-S) centers, to quinones in the respiratory chain. The immediate electron acceptor for the enzyme in this species is believed to be ubiquinone. Couples the redox reaction to proton translocation (for every two electrons transferred, four hydrogen ions are translocated across the cytoplasmic membrane), and thus conserves the redox energy in a proton gradient. The chain is NADH-quinone oxidoreductase subunit A from Rickettsia bellii (strain RML369-C).